The sequence spans 192 residues: MSKEAYFSGESIQLSDMLRAREERALRQLHLLKEYPEGSLLSVTMNIPGPIKTSPKLLEAFDIVIKAIQTALADDKICYQLRLLPTTGYEYYLITSLPSRDLKLKMIALETELPIGRLMDLDVLVLQNDLPHSISRTVLGGSPRQCFICSKEAKVCGRLRKHSVEEMQTAISKLLHSFFNKDNQSSSSDKTG.

The protein belongs to the CitX family.

The catalysed reaction is apo-[citrate lyase ACP] + 2'-(5''-triphospho-alpha-D-ribosyl)-3'-dephospho-CoA = holo-[citrate lyase ACP] + diphosphate. Its function is as follows. Transfers 2-(5''-triphosphoribosyl)-3'-dephosphocoenzyme-A on a serine residue to the apo-acyl carrier protein (gamma chain) of the citrate lyase to yield holo-acyl carrier protein. The polypeptide is Probable apo-citrate lyase phosphoribosyl-dephospho-CoA transferase (Streptococcus pyogenes serotype M6 (strain ATCC BAA-946 / MGAS10394)).